The following is a 551-amino-acid chain: Cytochrome c lysine N-methyltransferase 1 (551 aa).

Positions 46-273 (DKIELLRVSS…PNTEVLITYK (228 aa)) constitute an SET domain. The SET-like stretch occupies residues 184–288 (IELLRQIYSA…LAMITKYGFD (105 aa)).

This sequence belongs to the class V-like SAM-binding methyltransferase superfamily.

The protein localises to the cytoplasm. It localises to the cytosol. It carries out the reaction L-lysyl-[cytochrome c] + S-adenosyl-L-methionine = N(6)-methyl-L-lysyl-[cytochrome c] + S-adenosyl-L-homocysteine + H(+). Functionally, methyltransferase which mediates trimethylation of cytochrome c (CYC1). The polypeptide is Cytochrome c lysine N-methyltransferase 1 (CTM1) (Candida glabrata (strain ATCC 2001 / BCRC 20586 / JCM 3761 / NBRC 0622 / NRRL Y-65 / CBS 138) (Yeast)).